We begin with the raw amino-acid sequence, 124 residues long: Fluoride-specific ion channel FluC (124 aa).

Helical transmembrane passes span 1–21, 35–55, 68–88, and 99–119; these read MGVV…RFLL, VGTL…FAYL, LLIT…YESF, and FLAY…LGYI. Na(+) contacts are provided by Gly-75 and Thr-78.

It belongs to the fluoride channel Fluc/FEX (TC 1.A.43) family.

It is found in the cell inner membrane. It carries out the reaction fluoride(in) = fluoride(out). Its activity is regulated as follows. Na(+) is not transported, but it plays an essential structural role and its presence is essential for fluoride channel function. Functionally, fluoride-specific ion channel. Important for reducing fluoride concentration in the cell, thus reducing its toxicity. This Aquifex aeolicus (strain VF5) protein is Fluoride-specific ion channel FluC.